A 571-amino-acid polypeptide reads, in one-letter code: Urease subunit alpha (571 aa).

A Urease domain is found at Gly133 to Phe571. Ni(2+)-binding residues include His138, His140, and Lys221. At Lys221 the chain carries N6-carboxylysine. His223 contacts substrate. Residues His250 and His276 each coordinate Ni(2+). His324 acts as the Proton donor in catalysis. Asp364 is a Ni(2+) binding site.

The protein belongs to the metallo-dependent hydrolases superfamily. Urease alpha subunit family. As to quaternary structure, heterotrimer of UreA (gamma), UreB (beta) and UreC (alpha) subunits. Three heterotrimers associate to form the active enzyme. Ni cation is required as a cofactor. Post-translationally, carboxylation allows a single lysine to coordinate two nickel ions.

It is found in the cytoplasm. The catalysed reaction is urea + 2 H2O + H(+) = hydrogencarbonate + 2 NH4(+). It participates in nitrogen metabolism; urea degradation; CO(2) and NH(3) from urea (urease route): step 1/1. The protein is Urease subunit alpha of Corynebacterium efficiens (strain DSM 44549 / YS-314 / AJ 12310 / JCM 11189 / NBRC 100395).